The following is a 122-amino-acid chain: MIQMQTNLDVADNSGARRVQCIKVLGGAKRRYAHVGDIIVVSVKEAIPRGRVKKGDVRKAVVVRVAKDIQRKDGSVIRFDGNAAVIINNNNEPLGTRIFGPVPRELRAKNHMKIVSLAPEVL.

Belongs to the universal ribosomal protein uL14 family. Part of the 50S ribosomal subunit. Forms a cluster with proteins L3 and L19. In the 70S ribosome, L14 and L19 interact and together make contacts with the 16S rRNA in bridges B5 and B8.

In terms of biological role, binds to 23S rRNA. Forms part of two intersubunit bridges in the 70S ribosome. The protein is Large ribosomal subunit protein uL14 of Maricaulis maris (strain MCS10) (Caulobacter maris).